Reading from the N-terminus, the 223-residue chain is Oxaloacetate tautomerase FAHD1, mitochondrial (223 aa).

Residues Met-1–Leu-30 constitute a mitochondrion transit peptide. Positions 67, 69, and 98 each coordinate Mg(2+).

It belongs to the FAH family. The cofactor is Mg(2+). Mn(2+) is required as a cofactor.

It is found in the mitochondrion. The catalysed reaction is oxaloacetate = enol-oxaloacetate. Tautomerase that converts enol-oxaloacetate, a strong inhibitor of succinate dehydrogenase, to the physiological keto form of oxaloacetate. This chain is Oxaloacetate tautomerase FAHD1, mitochondrial, found in Arabidopsis thaliana (Mouse-ear cress).